Reading from the N-terminus, the 103-residue chain is Large ribosomal subunit protein bL21 (103 aa).

The protein belongs to the bacterial ribosomal protein bL21 family. As to quaternary structure, part of the 50S ribosomal subunit. Contacts protein L20.

This protein binds to 23S rRNA in the presence of protein L20. This is Large ribosomal subunit protein bL21 from Shewanella frigidimarina (strain NCIMB 400).